A 161-amino-acid chain; its full sequence is Endoribonuclease YbeY (161 aa).

Zn(2+)-binding residues include histidine 121, histidine 125, and histidine 131.

The protein belongs to the endoribonuclease YbeY family. Requires Zn(2+) as cofactor.

The protein localises to the cytoplasm. Its function is as follows. Single strand-specific metallo-endoribonuclease involved in late-stage 70S ribosome quality control and in maturation of the 3' terminus of the 16S rRNA. This chain is Endoribonuclease YbeY, found in Xanthomonas axonopodis pv. citri (strain 306).